Here is an 81-residue protein sequence, read N- to C-terminus: uncharacterized protein (81 aa).

The tract at residues 11–34 is disordered; the sequence is GSVSSSNKVSVANGSSSSSFGSNG.

This is an uncharacterized protein from Dictyostelium discoideum (Social amoeba).